The following is a 214-amino-acid chain: Transmembrane emp24 domain-containing protein p24beta3 (214 aa).

Positions 1-27 are cleaved as a signal peptide; that stretch reads MERRQAKIHVFVLIGLILLNSINQISS. Residues 28–178 lie on the Lumenal side of the membrane; that stretch reads LSVTVNDEEC…RHTNESTRKR (151 aa). Residues 35-122 form the GOLD domain; sequence EECVQEYVLY…PETVSFYIHV (88 aa). Residues 140 to 158 adopt a coiled-coil conformation; it reads VNVKIAELREALESVVAEQ. Omega-N-methylated arginine is present on residues R164 and R169. N-linked (GlcNAc...) asparagine glycosylation is present at N172. A helical transmembrane segment spans residues 179-199; the sequence is VIFYTVGEYIFLAAASGLQVL. The Cytoplasmic portion of the chain corresponds to 200 to 214; it reads YIRKLFSKSVAYNRV. The short motif at 204-205 is the COPII vesicle coat-binding element; sequence LF. The short motif at 204 to 214 is the COPI vesicle coat-binding element; it reads LFSKSVAYNRV. The Required for the export from the endoplasmic reticulum to the Golgi motif lies at 213 to 214; the sequence is RV.

The protein belongs to the EMP24/GP25L family. As to quaternary structure, probably oligomerizes with other members of the EMP24/GP25L family. Associates with the COPI vesicle coat (coatomer). Associates with the COPII vesicle coat (coatomer).

It is found in the golgi apparatus. It localises to the cis-Golgi network membrane. Its subcellular location is the golgi stack membrane. Its function is as follows. Involved in vesicular protein trafficking. Mainly functions in the early secretory pathway but also in post-Golgi membranes. Thought to act as cargo receptor at the lumenal side for incorporation of secretory cargo molecules into transport vesicles and to be involved in vesicle coat formation at the cytoplasmic side. This is Transmembrane emp24 domain-containing protein p24beta3 from Arabidopsis thaliana (Mouse-ear cress).